The chain runs to 156 residues: Large ribosomal subunit protein uL23 (156 aa).

Positions 1–19 (MAPKAKKEAPAPPKAEAKA) are enriched in basic and acidic residues. The segment at 1–67 (MAPKAKKEAP…PKYPRKSAPR (67 aa)) is disordered. N,N,N-trimethylalanine is present on A2. A Glycyl lysine isopeptide (Lys-Gly) (interchain with G-Cter in SUMO2) cross-link involves residue K14. The segment covering 20–67 (KALKAKKAVLKGVHSHKKKKIRTSPTFRRPKTLRLRRQPKYPRKSAPR) has biased composition (basic residues). The tract at residues 32 to 74 (VHSHKKKKIRTSPTFRRPKTLRLRRQPKYPRKSAPRRNKLDHY) is beta-like import receptor binding (BIB) domain. R41 carries the citrulline modification. Position 43 is a phosphoserine (S43). Position 45 is a phosphothreonine (T45). K70 carries the post-translational modification N6-acetyllysine.

The protein belongs to the universal ribosomal protein uL23 family. As to quaternary structure, component of the large ribosomal subunit. Interacts with LYAR and GNL2. Interacts with MDM2; this interaction may promote MDM2-mediated p53/TP53 polyubiquitination. Directly interacts (via BIB domain) with IPO5, IPO7, KPNB1 and TNPO1; these interactions are involved in RPL23A nuclear import for the assembly of ribosomal subunits. Interacts with IPO8. N-terminus is methylated by METTL11A/NTM1. In terms of processing, citrullinated by PADI4.

The protein resides in the cytoplasm. The protein localises to the nucleus. Component of the large ribosomal subunit. The ribosome is a large ribonucleoprotein complex responsible for the synthesis of proteins in the cell. Binds a specific region on the 26S rRNA. May promote p53/TP53 degradation possibly through the stimulation of MDM2-mediated TP53 polyubiquitination. The polypeptide is Large ribosomal subunit protein uL23 (RPL23A) (Bos taurus (Bovine)).